The chain runs to 99 residues: Seminal vesicle secretory protein 6 (99 aa).

The signal sequence occupies residues 1–21 (MSPTSFFLLTMLLVLVTETAA).

Belongs to the SVP2/SVP5/SVP6 family. In terms of tissue distribution, testis.

The protein localises to the secreted. It localises to the extracellular space. The polypeptide is Seminal vesicle secretory protein 6 (Svs6) (Mus musculus (Mouse)).